The sequence spans 142 residues: Small ribosomal subunit protein uS12 (142 aa).

The interval 1 to 43 (MPTFNQLVRKGRKVIEKKSNSPALQKGFNSKKKKPTDVNSPQK) is disordered. Aspartate 102 is modified (3-methylthioaspartic acid).

It belongs to the universal ribosomal protein uS12 family. As to quaternary structure, part of the 30S ribosomal subunit. Contacts proteins S8 and S17. May interact with IF1 in the 30S initiation complex.

With S4 and S5 plays an important role in translational accuracy. Its function is as follows. Interacts with and stabilizes bases of the 16S rRNA that are involved in tRNA selection in the A site and with the mRNA backbone. Located at the interface of the 30S and 50S subunits, it traverses the body of the 30S subunit contacting proteins on the other side and probably holding the rRNA structure together. The combined cluster of proteins S8, S12 and S17 appears to hold together the shoulder and platform of the 30S subunit. The protein is Small ribosomal subunit protein uS12 of Ruminiclostridium cellulolyticum (strain ATCC 35319 / DSM 5812 / JCM 6584 / H10) (Clostridium cellulolyticum).